A 261-amino-acid chain; its full sequence is tRNA pseudouridine synthase A (261 aa).

Asp-51 serves as the catalytic Nucleophile. Residue Tyr-109 participates in substrate binding.

The protein belongs to the tRNA pseudouridine synthase TruA family. As to quaternary structure, homodimer.

It catalyses the reaction uridine(38/39/40) in tRNA = pseudouridine(38/39/40) in tRNA. In terms of biological role, formation of pseudouridine at positions 38, 39 and 40 in the anticodon stem and loop of transfer RNAs. The sequence is that of tRNA pseudouridine synthase A from Shewanella woodyi (strain ATCC 51908 / MS32).